The sequence spans 199 residues: NAD(P)H dehydrogenase (quinone) (199 aa).

The region spanning Val4–Val190 is the Flavodoxin-like domain. Residues Ser10–Ile15 and Thr78–Phe80 contribute to the FMN site. Residue Tyr12 coordinates NAD(+). Position 98 (Trp98) interacts with substrate. FMN-binding positions include Ser113–Gly119 and His134.

It belongs to the WrbA family. FMN is required as a cofactor.

The catalysed reaction is a quinone + NADH + H(+) = a quinol + NAD(+). It catalyses the reaction a quinone + NADPH + H(+) = a quinol + NADP(+). The sequence is that of NAD(P)H dehydrogenase (quinone) from Rhizobium rhizogenes (strain K84 / ATCC BAA-868) (Agrobacterium radiobacter).